Consider the following 318-residue polypeptide: MFKSWSKRLKYAPTPLVGDEVLRAQGLKCVFDEKTPEEFWALNGIDFTFEKNKIYCIIGNSGSGKSTLVTHFNGLLTSKYGTLSIRDFKNNHDIVISPNTKKIKNFKRLRKIISMVFQFPEYQLFKDTIQKDIMFGPVALGVHKEEAAKLAKFYLNRMGLDSSYLDVSPFELSGGQKRRVAIAGILAIQSEIIIFDEPTAGLDPKGESEMVELILESKKENKTVIVITHQMEKVLEIADEVILLDKGKILTSGTPYQIFTNPEIMQTTSIALPHVVQVINDLSLRNPIFKKLYDYEPRTVKDLAKVINEVIKNYEKRN.

The 250-residue stretch at 22-271 (LRAQGLKCVF…PEIMQTTSIA (250 aa)) folds into the ABC transporter domain. 59-66 (GNSGSGKS) is an ATP binding site.

The protein belongs to the ABC transporter superfamily. Energy-coupling factor EcfA family. Forms a stable energy-coupling factor (ECF) transporter complex composed of 2 membrane-embedded substrate-binding proteins (S component), 2 ATP-binding proteins (A component) and 2 transmembrane proteins (T component).

The protein resides in the cell membrane. Its function is as follows. ATP-binding (A) component of a common energy-coupling factor (ECF) ABC-transporter complex. Unlike classic ABC transporters this ECF transporter provides the energy necessary to transport a number of different substrates. In Mycoplasmoides gallisepticum (strain R(low / passage 15 / clone 2)) (Mycoplasma gallisepticum), this protein is Energy-coupling factor transporter ATP-binding protein EcfA2.